Consider the following 88-residue polypeptide: Small ribosomal subunit protein bS18 (88 aa).

Positions 1-26 (MAFAQSGGAGGGGGQRRPFFRRRKTC) are disordered.

Belongs to the bacterial ribosomal protein bS18 family. As to quaternary structure, part of the 30S ribosomal subunit. Forms a tight heterodimer with protein bS6.

Binds as a heterodimer with protein bS6 to the central domain of the 16S rRNA, where it helps stabilize the platform of the 30S subunit. The protein is Small ribosomal subunit protein bS18 of Xanthobacter autotrophicus (strain ATCC BAA-1158 / Py2).